We begin with the raw amino-acid sequence, 55 residues long: Regulatory protein MokB (55 aa).

In terms of biological role, overlapping regulatory peptide whose translation enables hokB expression. In Escherichia coli (strain K12), this protein is Regulatory protein MokB (mokB).